The sequence spans 97 residues: YcgL domain-containing protein PFL_1496 (97 aa).

The YcgL domain maps to 3 to 87 (RICSIYKSPR…AEDEYIEHLP (85 aa)).

In Pseudomonas fluorescens (strain ATCC BAA-477 / NRRL B-23932 / Pf-5), this protein is YcgL domain-containing protein PFL_1496.